The sequence spans 379 residues: Beta sliding clamp (379 aa).

The protein belongs to the beta sliding clamp family. Forms a ring-shaped head-to-tail homodimer around DNA which binds and tethers DNA polymerases and other proteins to the DNA. The DNA replisome complex has a single clamp-loading complex (3 tau and 1 each of delta, delta', psi and chi subunits) which binds 3 Pol III cores (1 core on the leading strand and 2 on the lagging strand) each with a beta sliding clamp dimer. Additional proteins in the replisome are other copies of gamma, psi and chi, Ssb, DNA helicase and RNA primase.

The protein localises to the cytoplasm. Functionally, confers DNA tethering and processivity to DNA polymerases and other proteins. Acts as a clamp, forming a ring around DNA (a reaction catalyzed by the clamp-loading complex) which diffuses in an ATP-independent manner freely and bidirectionally along dsDNA. Initially characterized for its ability to contact the catalytic subunit of DNA polymerase III (Pol III), a complex, multichain enzyme responsible for most of the replicative synthesis in bacteria; Pol III exhibits 3'-5' exonuclease proofreading activity. The beta chain is required for initiation of replication as well as for processivity of DNA replication. This is Beta sliding clamp (dnaN) from Rickettsia bellii (strain RML369-C).